The following is a 588-amino-acid chain: MAQEQGHFQLLRADAIRSKLIDTFSLIEHLQGLSQAVPRHTLREILDPSYQQKLMSGDQEQLVRFSIKPRRMGHITHSRRLLSRLRVRCSRMPPLSLWAGWVLDSSVFSKFIISLIFLNTFVLMVEIELMESTNTALWPVKLALEVADWFILLSFIVEILLMWLASFSLFWKDAWNVFDFFVTLLSLLPELVVLLGVPAHSVWLQLLRVCRVLRSLKLFARFRQIKVILLALVRALKSMTFLLMLLLIFFYIFAVTGVYFFREYSRSTIEGLEYNMFFSDLLNSLVTVFILFTLDHWYAVLQDIWKVPESSRVFSSIYVILWLLLGSIIFRNIIVAMMVTNFQNIRSELSEEMSHLEVQYKADMFKQQIIQRRQHSESLRGTSLGKVSEDIIETSDASDDDDDDDDDDDDDDDDDDDKSDATESDNEESDSENSESENSESEKIDPEKDYAKKSYPEKSHPEKSYPEKSHPEKSYPEKSHPKKSYDEQAEAEKVKEESKEKAYPVSHSISSHGSTAADTAFLENLDWETLVHENLPGLMDMDQDDRIVWPRDSLFRYFELLEKLQYNLEERKKLQEFAVQALMSFEDK.

Over Met1–Ser106 the chain is Cytoplasmic. A helical transmembrane segment spans residues Val107–Leu129. The Extracellular portion of the chain corresponds to Met130–Trp138. Residues Pro139–Leu164 traverse the membrane as a helical segment. Residues Ala165 to Asp173 are Cytoplasmic-facing. The chain crosses the membrane as a helical span at residues Ala174 to Pro198. The Extracellular segment spans residues Ala199–Ser201. A helical transmembrane segment spans residues Val202–Ala220. The Cytoplasmic segment spans residues Arg221–Lys237. A helical membrane pass occupies residues Ser238 to Phe260. The Extracellular segment spans residues Phe261–Ser279. Positions Asp280–Phe292 form an intramembrane region, helical; Pore-forming. Residues Thr293–Arg312 lie on the Extracellular side of the membrane. A helical membrane pass occupies residues Val313–Val339. At Thr340–Lys588 the chain is on the cytoplasmic side. Residues Ser376–His512 are disordered. Residues Asp390 to Ser439 are compositionally biased toward acidic residues. The span at Glu440–Ala502 shows a compositional bias: basic and acidic residues.

It belongs to the cation channel sperm-associated (TC 1.A.1.19) family. As to quaternary structure, component of the CatSper complex or CatSpermasome composed of the core pore-forming members CATSPER1, CATSPER2, CATSPER3 and CATSPER4 as well as auxiliary members CATSPERB, CATSPERG2, CATSPERD, CATSPERE, CATSPERZ, C2CD6/CATSPERT, SLCO6C1, TMEM249, TMEM262 and EFCAB9. HSPA1 may be an additional auxiliary complex member. The core complex members CATSPER1, CATSPER2, CATSPER3 and CATSPER4 form a heterotetrameric channel. The auxiliary CATSPERB, CATSPERG2, CATSPERD and CATSPERE subunits form a pavilion-like structure over the pore which stabilizes the complex through interactions with CATSPER4, CATSPER3, CATSPER1 and CATSPER2 respectively. SLCO6C1 interacts with CATSPERE and TMEM262/CATSPERH interacts with CATSPERB, further stabilizing the complex. C2CD6/CATSPERT interacts at least with CATSPERD and is required for targeting the CatSper complex in the flagellar membrane. Interacts with Ca(v)3.3/CACNA1I, leading to suppression of T-type calcium channel activity. Testis-specific.

It is found in the cell projection. It localises to the cilium. The protein resides in the flagellum membrane. The catalysed reaction is Ca(2+)(in) = Ca(2+)(out). With respect to regulation, in contrast to the human ortholog, not activated by progesterone. Activated by intracellular alkalinization. In terms of biological role, pore-forming subunit of the CatSper complex, a sperm-specific voltage-gated calcium channel that plays a central role in sperm cell hyperactivation. Controls calcium entry to mediate the hyperactivated motility, a step needed for sperm motility which is essential late in the preparation of sperm for fertilization. This is Cation channel sperm-associated protein 2 (Catsper2) from Mus musculus (Mouse).